A 340-amino-acid chain; its full sequence is Selenide, water dikinase (340 aa).

U17 is an active-site residue. Residue U17 is a non-standard amino acid, selenocysteine. ATP contacts are provided by residues K20 and 45-47 (NNE). D48 serves as a coordination point for Mg(2+). Residues D65, D88, and 136 to 138 (GHT) contribute to the ATP site. D88 lines the Mg(2+) pocket. Position 224 (D224) interacts with Mg(2+).

It belongs to the selenophosphate synthase 1 family. Class I subfamily. In terms of assembly, homodimer. Mg(2+) serves as cofactor.

The catalysed reaction is hydrogenselenide + ATP + H2O = selenophosphate + AMP + phosphate + 2 H(+). Its function is as follows. Synthesizes selenophosphate from selenide and ATP. This Campylobacter jejuni subsp. jejuni serotype O:2 (strain ATCC 700819 / NCTC 11168) protein is Selenide, water dikinase.